The following is a 223-amino-acid chain: GRF1-interacting factor 3 (223 aa).

The tract at residues 179–223 (ANNAGPNDASGGGKPDGTNMSQSGADGQGGSAARHGGGDAKTEGK) is disordered. Residues 214–223 (GGGDAKTEGK) show a composition bias toward basic and acidic residues.

This sequence belongs to the SS18 family. In terms of assembly, interacts with GRF1. As to expression, predominantly expressed in shoot tips containing the shoot apical meristem (SAM) and flower buds. Also expressed in mature flowers.

In terms of biological role, transcription coactivator that plays a role in the regulation of cell expansion in leaf and cotyledons tissues. Component of a network formed by miR396, the GRFs and their interacting factors (GIFs) acting in the regulation of meristem function, at least partially through the control of cell proliferation. GIFs are involved in the positive regulation of cell proliferation of lateral organs in a functionally redundant manner. This is GRF1-interacting factor 3 (GIF3) from Arabidopsis thaliana (Mouse-ear cress).